We begin with the raw amino-acid sequence, 288 residues long: Bis(5'-nucleosyl)-tetraphosphatase, symmetrical (288 aa).

This sequence belongs to the Ap4A hydrolase family.

It carries out the reaction P(1),P(4)-bis(5'-adenosyl) tetraphosphate + H2O = 2 ADP + 2 H(+). In terms of biological role, hydrolyzes diadenosine 5',5'''-P1,P4-tetraphosphate to yield ADP. This is Bis(5'-nucleosyl)-tetraphosphatase, symmetrical from Pseudomonas putida (strain GB-1).